Consider the following 87-residue polypeptide: MTEKQVIHRILQGEVVSNKSDKSITVTVVRYVKHPLYGKYIKRTLRCHAHDENNECNIGDVVRISQSRPISKTKTWRLVEIVERAKG.

This sequence belongs to the universal ribosomal protein uS17 family. As to quaternary structure, part of the 30S ribosomal subunit.

One of the primary rRNA binding proteins, it binds specifically to the 5'-end of 16S ribosomal RNA. This Dichelobacter nodosus (strain VCS1703A) protein is Small ribosomal subunit protein uS17.